The primary structure comprises 245 residues: Major prion protein (245 aa).

Positions 1–22 (MANLGCWMLVVFVATWSDLGLC) are cleaved as a signal peptide. Residues 23–222 (KKRPKPGGWN…ESQAYYQRGS (200 aa)) form an interaction with GRB2, ERI3 and SYN1 region. Residues 25–102 (RPKPGGWNTG…KPSKPKTSMK (78 aa)) are disordered. Repeat copies occupy residues 51–59 (PQGGGGWGQ), 60–67 (PHGGGWGQ), 68–75 (PHGGGWGQ), and 76–83 (PHGGGWGQ). The interval 51-83 (PQGGGGWGQPHGGGWGQPHGGGWGQPHGGGWGQ) is 4 X 8 AA tandem repeats of P-H-G-G-G-W-G-Q. A compositionally biased stretch (gly residues) spans 52-87 (QGGGGWGQPHGGGWGQPHGGGWGQPHGGGWGQGGGT). Positions 54, 55, 61, 62, 63, 69, 70, 71, 77, 78, and 79 each coordinate Cu(2+). A compositionally biased stretch (basic residues) spans 90-101 (QWHKPSKPKTSM). C171 and C206 are joined by a disulfide. 2 N-linked (GlcNAc...) asparagine glycosylation sites follow: N173 and N189. S222 is lipidated: GPI-anchor amidated serine. A propeptide spans 223–245 (SMVLFSSPPVILLISFLIFLIVG) (removed in mature form).

Belongs to the prion family. As to quaternary structure, monomer and homodimer. Has a tendency to aggregate into amyloid fibrils containing a cross-beta spine, formed by a steric zipper of superposed beta-strands. Soluble oligomers may represent an intermediate stage on the path to fibril formation. Copper binding may promote oligomerization. Interacts with GRB2, APP, ERI3/PRNPIP and SYN1. Mislocalized cytosolically exposed PrP interacts with MGRN1; this interaction alters MGRN1 subcellular location and causes lysosomal enlargement. Interacts with KIAA1191.

It is found in the cell membrane. Its subcellular location is the golgi apparatus. Its function is as follows. Its primary physiological function is unclear. Has cytoprotective activity against internal or environmental stresses. May play a role in neuronal development and synaptic plasticity. May be required for neuronal myelin sheath maintenance. May play a role in iron uptake and iron homeostasis. Soluble oligomers are toxic to cultured neuroblastoma cells and induce apoptosis (in vitro). Association with GPC1 (via its heparan sulfate chains) targets PRNP to lipid rafts. Also provides Cu(2+) or Zn(2+) for the ascorbate-mediated GPC1 deaminase degradation of its heparan sulfate side chains. This is Major prion protein (PRNP) from Cercopithecus diana (Diana monkey).